The sequence spans 217 residues: ATP synthase subunit 4, mitochondrial (217 aa).

Residues 1-14 constitute a mitochondrion transit peptide; sequence MPFARVGALSARHY. Helical transmembrane passes span 41-61 and 66-86; these read GVLA…LYIV and IVLG…GPGY.

As to quaternary structure, F-type ATP synthases have 2 components, the catalytic core F(1) and the membrane-embedded component F(0), linked together by a central stalk and a peripheral stalk. The central stalk, also called rotor shaft, is often seen as part of F(1). The peripheral stalk is seen as part of F(0). F(0) contains the membrane channel next to the rotor. F-type ATP synthases form dimers but each monomer functions independently in ATP generation. The dimer consists of 17 different polypeptides: ATP1 (subunit alpha, 3 molecules per monomer, part of F(1)), ATP2 (subunit beta, 3 copies per monomer, part of F(1)), ATP3 (subunit gamma, part of the central stalk), ATP4 (subunit b, part of the peripheral stalk), ATP5/OSCP (subunit 5/OSCP, part of the peripheral stalk), ATP6 (subunit a, part of the peripheral stalk), ATP7 (subunit d, part of the peripheral stalk), ATP8 (subunit 8, part of the peripheral stalk), OLI1 (subunit c, part of the rotor, 10 molecules per monomer), ATP14 (subunit h, part of the peripheral stalk), ATP15 (subunit epsilon, part of the central stalk), ATP16 (subunit delta, part of the central stalk), ATP17 (subunit f, part of the peripheral stalk), ATP18 (subunit i/j, part of the peripheral stalk), ATP19 (subunit k, dimer-specific, at interface between monomers), ATP20 (subunit g, at interface between monomers), TIM11 (subunit e, at interface between monomers).

Its subcellular location is the mitochondrion inner membrane. Mitochondrial membrane ATP synthase (F(1)F(0) ATP synthase or Complex V) produces ATP from ADP in the presence of a proton gradient across the membrane which is generated by electron transport complexes of the respiratory chain. F-type ATP synthases consist of two structural domains, F(1) - containing the extramembraneous catalytic core, and F(0) - containing the membrane proton channel, linked together by a central stalk and a peripheral stalk. During catalysis, ATP synthesis in the catalytic domain of F(1) is coupled via a rotary mechanism of the central stalk subunits to proton translocation. Part of the complex F(0) domain and the peripheral stalk, which acts as a stator to hold the catalytic alpha/ATP1(3)beta/ATP2(3) subcomplex and subunit a/ATP6 static relative to the rotary elements. This chain is ATP synthase subunit 4, mitochondrial, found in Yarrowia lipolytica (strain CLIB 122 / E 150) (Yeast).